The sequence spans 591 residues: Adsorption protein P2 (591 aa).

A disulfide bridge links Cys-254 with Cys-277.

Its subcellular location is the virion. In terms of biological role, adsorption protein. In association with P31 and trimeric P5, forms the spike complexes located at the 5-fold vertices of the capsid. Involved in recognition and attachment to the receptor on the surface of the host. Likely triggers the processes of vertex disassembly, membrane tube formation, and subsequent DNA injection. Essential for viral infectivity. This Acinetobacter calcoaceticus (Arthrobacter siderocapsulatus) protein is Adsorption protein P2 (II).